A 316-amino-acid chain; its full sequence is Homoserine kinase (316 aa).

97–107 is an ATP binding site; that stretch reads PPARGLGSSAS.

Belongs to the GHMP kinase family. Homoserine kinase subfamily.

The protein resides in the cytoplasm. The catalysed reaction is L-homoserine + ATP = O-phospho-L-homoserine + ADP + H(+). Its pathway is amino-acid biosynthesis; L-threonine biosynthesis; L-threonine from L-aspartate: step 4/5. Functionally, catalyzes the ATP-dependent phosphorylation of L-homoserine to L-homoserine phosphate. This is Homoserine kinase from Prochlorococcus marinus (strain MIT 9313).